Consider the following 119-residue polypeptide: Large ribosomal subunit protein bL20 (119 aa).

It belongs to the bacterial ribosomal protein bL20 family.

Its function is as follows. Binds directly to 23S ribosomal RNA and is necessary for the in vitro assembly process of the 50S ribosomal subunit. It is not involved in the protein synthesizing functions of that subunit. The protein is Large ribosomal subunit protein bL20 of Streptococcus gordonii (strain Challis / ATCC 35105 / BCRC 15272 / CH1 / DL1 / V288).